The primary structure comprises 188 residues: Protein GrpE 2 (188 aa).

This sequence belongs to the GrpE family. Homodimer.

The protein resides in the cytoplasm. In terms of biological role, participates actively in the response to hyperosmotic and heat shock by preventing the aggregation of stress-denatured proteins, in association with DnaK and GrpE. It is the nucleotide exchange factor for DnaK and may function as a thermosensor. Unfolded proteins bind initially to DnaJ; upon interaction with the DnaJ-bound protein, DnaK hydrolyzes its bound ATP, resulting in the formation of a stable complex. GrpE releases ADP from DnaK; ATP binding to DnaK triggers the release of the substrate protein, thus completing the reaction cycle. Several rounds of ATP-dependent interactions between DnaJ, DnaK and GrpE are required for fully efficient folding. This is Protein GrpE 2 from Buchnera aphidicola subsp. Acyrthosiphon pisum (strain APS) (Acyrthosiphon pisum symbiotic bacterium).